A 398-amino-acid chain; its full sequence is 4-hydroxy-3-methylbut-2-enyl diphosphate reductase (398 aa).

Residue cysteine 66 participates in [4Fe-4S] cluster binding. (2E)-4-hydroxy-3-methylbut-2-enyl diphosphate is bound at residue histidine 96. Histidine 96 contacts dimethylallyl diphosphate. Histidine 96 provides a ligand contact to isopentenyl diphosphate. Cysteine 157 serves as a coordination point for [4Fe-4S] cluster. (2E)-4-hydroxy-3-methylbut-2-enyl diphosphate is bound at residue histidine 185. Dimethylallyl diphosphate is bound at residue histidine 185. Isopentenyl diphosphate is bound at residue histidine 185. Glutamate 187 serves as the catalytic Proton donor. Threonine 250 provides a ligand contact to (2E)-4-hydroxy-3-methylbut-2-enyl diphosphate. [4Fe-4S] cluster is bound at residue cysteine 288. (2E)-4-hydroxy-3-methylbut-2-enyl diphosphate contacts are provided by serine 317, serine 318, asparagine 319, and serine 380. Serine 317, serine 318, asparagine 319, and serine 380 together coordinate dimethylallyl diphosphate. Isopentenyl diphosphate contacts are provided by serine 317, serine 318, asparagine 319, and serine 380.

The protein belongs to the IspH family. It depends on [4Fe-4S] cluster as a cofactor.

The catalysed reaction is isopentenyl diphosphate + 2 oxidized [2Fe-2S]-[ferredoxin] + H2O = (2E)-4-hydroxy-3-methylbut-2-enyl diphosphate + 2 reduced [2Fe-2S]-[ferredoxin] + 2 H(+). The enzyme catalyses dimethylallyl diphosphate + 2 oxidized [2Fe-2S]-[ferredoxin] + H2O = (2E)-4-hydroxy-3-methylbut-2-enyl diphosphate + 2 reduced [2Fe-2S]-[ferredoxin] + 2 H(+). It participates in isoprenoid biosynthesis; dimethylallyl diphosphate biosynthesis; dimethylallyl diphosphate from (2E)-4-hydroxy-3-methylbutenyl diphosphate: step 1/1. It functions in the pathway isoprenoid biosynthesis; isopentenyl diphosphate biosynthesis via DXP pathway; isopentenyl diphosphate from 1-deoxy-D-xylulose 5-phosphate: step 6/6. In terms of biological role, catalyzes the conversion of 1-hydroxy-2-methyl-2-(E)-butenyl 4-diphosphate (HMBPP) into a mixture of isopentenyl diphosphate (IPP) and dimethylallyl diphosphate (DMAPP). Acts in the terminal step of the DOXP/MEP pathway for isoprenoid precursor biosynthesis. The sequence is that of 4-hydroxy-3-methylbut-2-enyl diphosphate reductase from Prochlorococcus marinus (strain AS9601).